Consider the following 506-residue polypeptide: Glycine--tRNA ligase (506 aa).

Substrate is bound by residues R99 and E189. ATP contacts are provided by residues 221–223 (RNE), 231–236 (FRVREL), 306–307 (EI), and 365–368 (GVDR). 236-240 (LEQME) lines the substrate pocket. 361-365 (EPSAG) contributes to the substrate binding site.

Belongs to the class-II aminoacyl-tRNA synthetase family. In terms of assembly, homodimer.

It is found in the cytoplasm. It catalyses the reaction tRNA(Gly) + glycine + ATP = glycyl-tRNA(Gly) + AMP + diphosphate. Its function is as follows. Catalyzes the attachment of glycine to tRNA(Gly). The chain is Glycine--tRNA ligase from Deinococcus radiodurans (strain ATCC 13939 / DSM 20539 / JCM 16871 / CCUG 27074 / LMG 4051 / NBRC 15346 / NCIMB 9279 / VKM B-1422 / R1).